Reading from the N-terminus, the 510-residue chain is Histidine ammonia-lyase (510 aa).

A cross-link (5-imidazolinone (Ala-Gly)) is located at residues 143 to 145; it reads ASG. Residue serine 144 is modified to 2,3-didehydroalanine (Ser).

This sequence belongs to the PAL/histidase family. Post-translationally, contains an active site 4-methylidene-imidazol-5-one (MIO), which is formed autocatalytically by cyclization and dehydration of residues Ala-Ser-Gly.

The protein resides in the cytoplasm. The catalysed reaction is L-histidine = trans-urocanate + NH4(+). It functions in the pathway amino-acid degradation; L-histidine degradation into L-glutamate; N-formimidoyl-L-glutamate from L-histidine: step 1/3. In Aliivibrio fischeri (strain MJ11) (Vibrio fischeri), this protein is Histidine ammonia-lyase.